The sequence spans 393 residues: Cytochrome b (393 aa).

Residues 1 to 33 lie on the Mitochondrial matrix side of the membrane; sequence MTIRNQRFSLLKQPISSTLNQHLVDYPTPSNLS. The chain crosses the membrane as a helical span at residues 34-57; sequence YWWGFGSLAGICLVIQIVTGVFLA. Over 58–80 the chain is Mitochondrial intermembrane; the sequence is MHYTPHVDLAFNSVEHIMRDVEG. The chain crosses the membrane as a helical span at residues 81 to 108; the sequence is GWLLRYMHANGASMFFIVVYLHIFRGLY. Positions 88 and 102 each coordinate heme b. The Mitochondrial matrix segment spans residues 109–116; it reads YASYSSPR. The helical transmembrane segment at 117-141 threads the bilayer; that stretch reads EFVWCLGVVIFLLMIVTAFIGYVLP. Over 142–178 the chain is Mitochondrial intermembrane; sequence WGQMSFWGATVITSLASAIPVVGDTIVTWLWGGFSVD. A helical membrane pass occupies residues 179–210; it reads NATLNRFFSLHYLLPFILVGASLLHLAALHQY. Positions 189 and 203 each coordinate heme b. His208 provides a ligand contact to a ubiquinone. At 211–229 the chain is on the mitochondrial matrix side; sequence GSNNPLGVHSEMDKIAFYP. The chain crosses the membrane as a helical span at residues 230-252; it reads YFYVKDLVGWVAFAIFFSIWIFY. At 253–293 the chain is on the mitochondrial intermembrane side; sequence APNVLGHPDNYIPANPMSTPPHIVPEWYFLPIYAILRSIPD. A helical membrane pass occupies residues 294-314; the sequence is KAGGVAAIALVFICLLALPFF. At 315–325 the chain is on the mitochondrial matrix side; that stretch reads KSMYVRSSSFR. The helical transmembrane segment at 326 to 346 threads the bilayer; it reads PIYQGMFWLLLADCLLLGWIG. Over 347–353 the chain is Mitochondrial intermembrane; sequence CQPVEAP. A helical transmembrane segment spans residues 354 to 370; the sequence is FVTIGQISSLVFFLFFA. Residues 371–393 are Mitochondrial matrix-facing; it reads ITPILGRVGRGIPNSYTDETDHT.

This sequence belongs to the cytochrome b family. In terms of assembly, component of the ubiquinol-cytochrome c oxidoreductase (cytochrome b-c1 complex, complex III, CIII), a multisubunit enzyme composed of 10 subunits. The complex is composed of 3 respiratory subunits cytochrome b (MT-CYB), cytochrome c1 (CYC1-1 or CYC1-2) and Rieske protein (UCR1-1 or UCR1-2), 2 core protein subunits MPPalpha1 (or MPPalpha2) and MPPB, and 5 low-molecular weight protein subunits QCR7-1 (or QCR7-2), UCRQ-1 (or UCRQ-2), QCR9, UCRY and probably QCR6-1 (or QCR6-2). The complex exists as an obligatory dimer and forms supercomplexes (SCs) in the inner mitochondrial membrane with NADH-ubiquinone oxidoreductase (complex I, CI), resulting in different assemblies (supercomplexes SCI(1)III(2) and SCI(2)III(4)). It depends on heme b as a cofactor.

It is found in the mitochondrion inner membrane. Its function is as follows. Component of the ubiquinol-cytochrome c oxidoreductase, a multisubunit transmembrane complex that is part of the mitochondrial electron transport chain which drives oxidative phosphorylation. The respiratory chain contains 3 multisubunit complexes succinate dehydrogenase (complex II, CII), ubiquinol-cytochrome c oxidoreductase (cytochrome b-c1 complex, complex III, CIII) and cytochrome c oxidase (complex IV, CIV), that cooperate to transfer electrons derived from NADH and succinate to molecular oxygen, creating an electrochemical gradient over the inner membrane that drives transmembrane transport and the ATP synthase. The cytochrome b-c1 complex catalyzes electron transfer from ubiquinol to cytochrome c, linking this redox reaction to translocation of protons across the mitochondrial inner membrane, with protons being carried across the membrane as hydrogens on the quinol. In the process called Q cycle, 2 protons are consumed from the matrix, 4 protons are released into the intermembrane space and 2 electrons are passed to cytochrome c. Cytochrome b is a catalytic core subunit containing 2 b-type hemes BL and BH topographically segregated in the quinone reduction (Qi) and quinol oxidation (Q0) sites on opposite sides of the membrane. In Arabidopsis thaliana (Mouse-ear cress), this protein is Cytochrome b (MT-CYB).